The chain runs to 152 residues: Small ribosomal subunit protein uS19 (152 aa).

It belongs to the universal ribosomal protein uS19 family.

This chain is Small ribosomal subunit protein uS19 (RPS15), found in Podospora anserina (Pleurage anserina).